A 238-amino-acid chain; its full sequence is Uridylate kinase (238 aa).

12 to 15 (KLSG) lines the ATP pocket. UMP is bound at residue Gly54. Gly55 and Arg59 together coordinate ATP. UMP-binding positions include Asp74 and 135–142 (TGNPFFTT). Residues Thr162, Tyr168, and Asp171 each coordinate ATP.

It belongs to the UMP kinase family. In terms of assembly, homohexamer.

The protein resides in the cytoplasm. The catalysed reaction is UMP + ATP = UDP + ADP. It functions in the pathway pyrimidine metabolism; CTP biosynthesis via de novo pathway; UDP from UMP (UMPK route): step 1/1. Inhibited by UTP. Its function is as follows. Catalyzes the reversible phosphorylation of UMP to UDP. The protein is Uridylate kinase of Nitrosospira multiformis (strain ATCC 25196 / NCIMB 11849 / C 71).